A 239-amino-acid chain; its full sequence is UDP-2,3-diacylglucosamine hydrolase (239 aa).

Mn(2+) contacts are provided by Asp8, His10, Asp41, Asn78, and His113. Position 78 to 79 (78 to 79) interacts with substrate; sequence NR. Positions 121, 159, 163, 166, and 194 each coordinate substrate. Mn(2+) contacts are provided by His194 and His196.

This sequence belongs to the LpxH family. The cofactor is Mn(2+).

The protein localises to the cell inner membrane. It catalyses the reaction UDP-2-N,3-O-bis[(3R)-3-hydroxytetradecanoyl]-alpha-D-glucosamine + H2O = 2-N,3-O-bis[(3R)-3-hydroxytetradecanoyl]-alpha-D-glucosaminyl 1-phosphate + UMP + 2 H(+). It participates in glycolipid biosynthesis; lipid IV(A) biosynthesis; lipid IV(A) from (3R)-3-hydroxytetradecanoyl-[acyl-carrier-protein] and UDP-N-acetyl-alpha-D-glucosamine: step 4/6. Hydrolyzes the pyrophosphate bond of UDP-2,3-diacylglucosamine to yield 2,3-diacylglucosamine 1-phosphate (lipid X) and UMP by catalyzing the attack of water at the alpha-P atom. Involved in the biosynthesis of lipid A, a phosphorylated glycolipid that anchors the lipopolysaccharide to the outer membrane of the cell. In Shewanella sp. (strain MR-7), this protein is UDP-2,3-diacylglucosamine hydrolase.